Reading from the N-terminus, the 151-residue chain is Large ribosomal subunit protein uL13 (151 aa).

The segment at Tyr-126–Arg-151 is disordered. Over residues His-131–Lys-140 the composition is skewed to basic and acidic residues.

This sequence belongs to the universal ribosomal protein uL13 family. As to quaternary structure, part of the 50S ribosomal subunit.

Functionally, this protein is one of the early assembly proteins of the 50S ribosomal subunit, although it is not seen to bind rRNA by itself. It is important during the early stages of 50S assembly. This chain is Large ribosomal subunit protein uL13, found in Trichodesmium erythraeum (strain IMS101).